A 568-amino-acid chain; its full sequence is MTSITALLPAPRYPTPGPKMSIFTTNAVSMAKNDSVPKYGSRTDWKPTSQADFNDGGAYPEIHIAQYPRNMGKPGSVSSNAITLKMDASGSADYSLIATQGHAADRHVQTSYDSLIPLRERIDAGTVSLEKPGEEAEQSTALATQAAFDKRLAANDKSGTKNKSDPQYIRYTANSMMGTEGGESQKIIKMVDLPQDPLEPPKFKHTKVPGRPASPPAPILRSPPRKLTAQDQKDWAIPSTVSNWKNQKGFTISLDKRMAADGRGLEDVKVNENFAKFSEVLNQNEKTMRDDIGKRREMQQRVAERQAQEQEEKLRELARRARQEREVGDESKGKEKEADGEDDRGRSRERLRSVSRDGDSDRSLSRSLSASDRSYSRSRSPYESRSRGRSYSRSRSPESRFRGRSDSRSRSPGYELERAAKKRKTERLERKREAERDLRLSKMGTQQKIKQLAKENSRDISERVALGAAQPQKLAGEAQFDSRLFSKSGSLQRGFNEDQYYDKSLFSAQEAVQSIYRPSASGDSVAEDTIDRLETEKRFDVLGKAGKGFEGADGEERDGPVRFVRDEE.

Disordered stretches follow at residues 199-232 (EPPK…AQDQ), 281-449 (LNQN…QQKI), and 545-568 (AGKG…RDEE). Basic and acidic residues predominate over residues 286-364 (KTMRDDIGKR…SRDGDSDRSL (79 aa)). Over residues 365–379 (SRSLSASDRSYSRSR) the composition is skewed to low complexity. 3 stretches are compositionally biased toward basic and acidic residues: residues 395–419 (RSPE…LERA), 426–440 (ERLE…DLRL), and 557–568 (RDGPVRFVRDEE).

This sequence belongs to the SNW family. As to quaternary structure, associated with the spliceosome.

The protein localises to the nucleus. Functionally, involved in pre-mRNA splicing. This chain is Pre-mRNA-processing protein 45 (PRP45), found in Yarrowia lipolytica (strain CLIB 122 / E 150) (Yeast).